Here is a 375-residue protein sequence, read N- to C-terminus: MRIRPSPPKKPTPGLLHEYADRLVAFEYSASKGLKPHTLLFISGLGDGLGTVAYLEDIVAALEGSQWSVFSPVISSSYGGWGTSGLGRDTDEMARCIEYIQKYKEGSGVHETERKIVIMGHSTGSQDVLTYISSPNPRHPQPGLDPGHGHRHKRMPPLRPQVDGAIMQAPVSDRQAIQTVLEEGNERHSAKYMRKVVNDAIAYAKKHTYEDYDSLDTIIPLPITAAIGYPASTAVSSRRFLSLTSPDSPDSPGEDDLFSSDLTDERLRKTFGMVRHRGVLKDQKGLLVLYSGNDPSVPAFVDKEGLLRRWRWATDADEKRAYWHGESGIIPGATHTLEGPGQVEQRKELVRRVWMFLADVEGDPRTSCHSARPLS.

Residues 138-158 (RHPQPGLDPGHGHRHKRMPPL) form a disordered region.

This sequence belongs to the sidJ hydrolase family. Homodimer.

It participates in secondary metabolite biosynthesis. Esterase; part of a cluster that mediates the biosynthesis of a yet undetermined secondary metabolite. With the HR-PKS AN6791, produces a pathway intermediate compound with molecular weight 258. In Emericella nidulans (strain FGSC A4 / ATCC 38163 / CBS 112.46 / NRRL 194 / M139) (Aspergillus nidulans), this protein is Esterase AN6793.